Consider the following 146-residue polypeptide: Hemoglobin subunit beta (146 aa).

The Globin domain occupies 2 to 146; the sequence is HWTAEEKQLI…VAHALARKYH (145 aa). Heme b is bound by residues histidine 63 and histidine 92.

The protein belongs to the globin family. As to quaternary structure, heterotetramer of two alpha chains and two beta chains. As to expression, red blood cells.

Involved in oxygen transport from the lung to the various peripheral tissues. The protein is Hemoglobin subunit beta (HBB) of Anas platyrhynchos platyrhynchos (Northern mallard).